Reading from the N-terminus, the 486-residue chain is N-succinylglutamate 5-semialdehyde dehydrogenase (486 aa).

Position 220–225 (220–225) interacts with NAD(+); that stretch reads GSSRTG. Catalysis depends on residues E243 and C277.

Belongs to the aldehyde dehydrogenase family. AstD subfamily.

It catalyses the reaction N-succinyl-L-glutamate 5-semialdehyde + NAD(+) + H2O = N-succinyl-L-glutamate + NADH + 2 H(+). It functions in the pathway amino-acid degradation; L-arginine degradation via AST pathway; L-glutamate and succinate from L-arginine: step 4/5. Catalyzes the NAD-dependent reduction of succinylglutamate semialdehyde into succinylglutamate. This Shewanella baltica (strain OS223) protein is N-succinylglutamate 5-semialdehyde dehydrogenase.